A 292-amino-acid chain; its full sequence is Acidic endochitinase (292 aa).

The first 25 residues, 1–25, serve as a signal peptide directing secretion; that stretch reads MAAHKITTTLSIFFLLSSIFRSSDA. A GH18 domain is found at 26–292; sequence AGIAIYWGQN…YSDSIKGSIG (267 aa). 2 disulfide bridges follow: Cys-45–Cys-92 and Cys-75–Cys-82. The Proton donor role is filled by Glu-152. A disulfide bridge links Cys-180 with Cys-209.

Belongs to the glycosyl hydrolase 18 family. Chitinase class II subfamily.

It is found in the secreted. The protein localises to the extracellular space. The catalysed reaction is Random endo-hydrolysis of N-acetyl-beta-D-glucosaminide (1-&gt;4)-beta-linkages in chitin and chitodextrins.. This protein functions as a defense against chitin containing fungal pathogens. This chain is Acidic endochitinase, found in Cucumis sativus (Cucumber).